A 116-amino-acid chain; its full sequence is Large ribosomal subunit protein bL20 (116 aa).

This sequence belongs to the bacterial ribosomal protein bL20 family.

In terms of biological role, binds directly to 23S ribosomal RNA and is necessary for the in vitro assembly process of the 50S ribosomal subunit. It is not involved in the protein synthesizing functions of that subunit. In Thermosynechococcus vestitus (strain NIES-2133 / IAM M-273 / BP-1), this protein is Large ribosomal subunit protein bL20.